The chain runs to 691 residues: Amino-acid acetyltransferase, mitochondrial (691 aa).

The segment covering 1-27 has biased composition (polar residues); that stretch reads MSSTSLAWPRTAKSSLLQSADFSSTSK. 2 disordered regions span residues 1–29 and 65–95; these read MSST…SKGY and RLKA…PSGV. Residues 75–87 show a composition bias toward basic and acidic residues; the sequence is QVKEPEKESKDDA. The region spanning 512-681 is the N-acetyltransferase domain; that stretch reads NRPRMSLDDP…YEAVCRSIQP (170 aa).

It belongs to the acetyltransferase family.

The protein resides in the mitochondrion. It catalyses the reaction L-glutamate + acetyl-CoA = N-acetyl-L-glutamate + CoA + H(+). The protein operates within amino-acid biosynthesis; L-arginine biosynthesis; N(2)-acetyl-L-ornithine from L-glutamate: step 1/4. Its function is as follows. N-acetylglutamate synthase involved in arginine biosynthesis. The sequence is that of Amino-acid acetyltransferase, mitochondrial (arg2) from Aspergillus terreus (strain NIH 2624 / FGSC A1156).